The following is a 326-amino-acid chain: Guanine nucleotide-binding protein subunit beta-like protein 1 (326 aa).

WD repeat units lie at residues 17–61, 64–104, 159–202, 205–244, 250–291, and 292–325; these read GTQS…IVTT, GHGG…NTIM, ARPG…VCSQ, CHEEPVMGLDFDSQKAKGISGSAGKVLAVWSLDDQQSLQV, LTNP…AVLA, and FHSAPVYCVAFAADGLLAAGSKDQRISIWSLYPC.

As to expression, expressed at low levels in most tissues and highly expressed in adult testis. Widely expressed in adult brain with striking regional distribution in forebrain, midbrain, and hindbrain structures, including the thalamus, hypothalamus, amygdala, hippocampus, pons.

It localises to the cytoplasm. The protein resides in the nucleus. Its function is as follows. Acts as a critical regulator of DNA damage response (DDR) signaling via specifically regulating phosphatidylinositol 3-kinase-related protein kinase (PIKK) family proteins. The chain is Guanine nucleotide-binding protein subunit beta-like protein 1 (Gnb1l) from Mus musculus (Mouse).